The chain runs to 316 residues: Small ribosomal subunit biogenesis GTPase RsgA (316 aa).

Positions 83 to 248 (DQYKSKLFAA…LIDSPGFQEF (166 aa)) constitute a CP-type G domain. GTP-binding positions include 131 to 134 (NKTD) and 185 to 193 (GQSGMGKST). Zn(2+)-binding residues include Cys-272, Cys-277, His-279, and Cys-285.

It belongs to the TRAFAC class YlqF/YawG GTPase family. RsgA subfamily. In terms of assembly, monomer. Associates with 30S ribosomal subunit, binds 16S rRNA. Zn(2+) serves as cofactor.

Its subcellular location is the cytoplasm. Its function is as follows. One of several proteins that assist in the late maturation steps of the functional core of the 30S ribosomal subunit. Helps release RbfA from mature subunits. May play a role in the assembly of ribosomal proteins into the subunit. Circularly permuted GTPase that catalyzes slow GTP hydrolysis, GTPase activity is stimulated by the 30S ribosomal subunit. The polypeptide is Small ribosomal subunit biogenesis GTPase RsgA (Paraburkholderia xenovorans (strain LB400)).